The chain runs to 98 residues: Small ribosomal subunit protein eS24 (98 aa).

It belongs to the eukaryotic ribosomal protein eS24 family.

This chain is Small ribosomal subunit protein eS24, found in Thermococcus onnurineus (strain NA1).